The chain runs to 334 residues: Zinc finger Ran-binding domain-containing protein 2 (334 aa).

2 consecutive RanBP2-type zinc fingers follow at residues 9-40 (SDGD…EKTT) and 65-94 (SAND…PKYA). The segment at 117–334 (REESDGEYDE…SGSRTSSKKK (218 aa)) is disordered. The segment covering 150–163 (DKESEGEDEEDEDG) has biased composition (acidic residues). A compositionally biased stretch (basic residues) spans 196–212 (KKKKSNRRSRSKSRSSH). Composition is skewed to low complexity over residues 213–224 (SRSSSRSSSHSS) and 258–285 (SRSS…SSSP). The span at 302 to 318 (RKKRRSRSRSPERRRRS) shows a compositional bias: basic residues. Residues 319–334 (SSGSSHSGSRTSSKKK) show a composition bias toward low complexity.

It belongs to the ZRANB2 family.

It is found in the nucleus. In terms of biological role, may regulate alternative splicing by interfering with constitutive 5'-splice site selection. The chain is Zinc finger Ran-binding domain-containing protein 2 from Gallus gallus (Chicken).